A 372-amino-acid chain; its full sequence is tRNA pseudouridine synthase D (372 aa).

Asp-85 (nucleophile) is an active-site residue. A TRUD domain is found at 160–330 (GFANYFGYQR…MQGSRRFMWG (171 aa)).

It belongs to the pseudouridine synthase TruD family.

It catalyses the reaction uridine(13) in tRNA = pseudouridine(13) in tRNA. In terms of biological role, responsible for synthesis of pseudouridine from uracil-13 in transfer RNAs. The protein is tRNA pseudouridine synthase D of Campylobacter jejuni subsp. jejuni serotype O:2 (strain ATCC 700819 / NCTC 11168).